The following is a 347-amino-acid chain: NADH-ubiquinone oxidoreductase chain 2 (347 aa).

A run of 11 helical transmembrane segments spans residues 3–23 (PIILIIILMTVMLGTIIVMIS), 25–45 (HWLLIWIGFEMNMLAIIPIMM), 67–87 (SMLLMMAIIINLMFSGQWTVM), 96–116 (MLMTMALAMKLGMAPFHFWVP), 122–142 (IPLSSGLILLTWQKLAPMSVL), 145–165 (ILPSINLDLILTLSILSITIG), 178–198 (IMAYSSIAHMGWMTAVLLYNP), 200–220 (MTLLNLIIYIIMTSTMFTLFM), 237–257 (APIMTILVLITLLSMGGLPPL), 274–294 (DSIILPTLMAITALLNLYFYM), and 325–345 (LLPTMTVLSTMLLPLTPILSI).

Belongs to the complex I subunit 2 family. In terms of assembly, core subunit of respiratory chain NADH dehydrogenase (Complex I) which is composed of 45 different subunits. Interacts with TMEM242.

The protein localises to the mitochondrion inner membrane. The enzyme catalyses a ubiquinone + NADH + 5 H(+)(in) = a ubiquinol + NAD(+) + 4 H(+)(out). Functionally, core subunit of the mitochondrial membrane respiratory chain NADH dehydrogenase (Complex I) which catalyzes electron transfer from NADH through the respiratory chain, using ubiquinone as an electron acceptor. Essential for the catalytic activity and assembly of complex I. The chain is NADH-ubiquinone oxidoreductase chain 2 from Ovis aries (Sheep).